The following is a 39-amino-acid chain: MTIDRTYPIFTVRWLAVHGLAVPTVFFLGAISAMQFIQR.

Residues 14-30 (WLAVHGLAVPTVFFLGA) traverse the membrane as a helical segment. Histidine 18 serves as a coordination point for heme.

The protein belongs to the PsbE/PsbF family. In terms of assembly, heterodimer of an alpha subunit and a beta subunit. PSII is composed of 1 copy each of membrane proteins PsbA, PsbB, PsbC, PsbD, PsbE, PsbF, PsbH, PsbI, PsbJ, PsbK, PsbL, PsbM, PsbT, PsbX, PsbY, PsbZ, Psb30/Ycf12, at least 3 peripheral proteins of the oxygen-evolving complex and a large number of cofactors. It forms dimeric complexes. Requires heme b as cofactor.

The protein localises to the plastid. The protein resides in the chloroplast thylakoid membrane. Its function is as follows. This b-type cytochrome is tightly associated with the reaction center of photosystem II (PSII). PSII is a light-driven water:plastoquinone oxidoreductase that uses light energy to abstract electrons from H(2)O, generating O(2) and a proton gradient subsequently used for ATP formation. It consists of a core antenna complex that captures photons, and an electron transfer chain that converts photonic excitation into a charge separation. In Physcomitrium patens (Spreading-leaved earth moss), this protein is Cytochrome b559 subunit beta.